A 113-amino-acid chain; its full sequence is U11-theraphotoxin-Hhn1a (113 aa).

The N-terminal stretch at 1–21 (MNTVRVTFLLVFVLAVSLGQA) is a signal peptide. A propeptide spanning residues 22–74 (DKDENRMEMQEKTEQGKSYLDFAENLLLQKLEELEAKLPEEDSEESRNSRQKR) is cleaved from the precursor. Over residues 58–69 (KLPEEDSEESRN) the composition is skewed to basic and acidic residues. The tract at residues 58 to 82 (KLPEEDSEESRNSRQKRCIGEGVPC) is disordered. 3 disulfide bridges follow: Cys75-Cys90, Cys82-Cys95, and Cys89-Cys110.

Belongs to the neurotoxin 14 (magi-1) family. 01 (HNTX-16) subfamily. Expressed by the venom gland.

The protein resides in the secreted. Functionally, probable ion channel inhibitor. This is U11-theraphotoxin-Hhn1a from Cyriopagopus hainanus (Chinese bird spider).